The chain runs to 467 residues: Fumarate hydratase class II (467 aa).

Residues 98–100 (SGT), Arg-126, 129–132 (HPND), 139–141 (SSN), and Thr-187 each bind substrate. His-188 acts as the Proton donor/acceptor in catalysis. Residue Ser-318 is part of the active site. Residues Ser-319 and 324-326 (KVN) each bind substrate.

It belongs to the class-II fumarase/aspartase family. Fumarase subfamily. In terms of assembly, homotetramer.

The protein localises to the cytoplasm. It catalyses the reaction (S)-malate = fumarate + H2O. The protein operates within carbohydrate metabolism; tricarboxylic acid cycle; (S)-malate from fumarate: step 1/1. Functionally, involved in the TCA cycle. Catalyzes the stereospecific interconversion of fumarate to L-malate. In Escherichia coli O157:H7, this protein is Fumarate hydratase class II.